A 324-amino-acid polypeptide reads, in one-letter code: Calmodulin-like protein 12 (324 aa).

EF-hand domains are found at residues 8–43, 44–79, 97–132, 133–168, 187–222, and 223–258; these read DQITEYRESFRLFDKNGDGSITKKELGTMMRSIGEK, PTKADLQDLMNEADLDGDGTIDFPEFLCVMAKNQGH, DQITEYRESFRLFDKNGDGSITKKELRTVMFSLGKN, RTKADLQDMMNEVDLDGDGTIDFPEFLYLMAKNQGH, DQILEFREAFRVFDKNGDGYITVNELRTTMRSLGET, and QTKAELQDMINEADADGDGTISFSEFVCVMTGKMID. Positions 21, 23, 25, 27, 32, 57, 59, 61, 63, 68, 110, 112, 114, 116, 121, 146, 148, 150, 152, 157, 200, 202, 204, 206, 211, 236, 238, 240, 242, and 247 each coordinate Ca(2+).

Belongs to the calmodulin family. Interacts with PID. Binds to ABCG36.

Potential calcium sensor that binds calcium in vitro. This is Calmodulin-like protein 12 from Arabidopsis thaliana (Mouse-ear cress).